The primary structure comprises 387 residues: Structural protein ORF387 (387 aa).

A coiled-coil region spans residues 315–387; it reads KTFQEMVKVA…EEKNNTVKLS (73 aa). The tract at residues 365 to 387 is disordered; sequence LTEEQQQQNETEEEEKNNTVKLS.

The protein resides in the virion. This chain is Structural protein ORF387, found in Acidianus convivator (ATV).